We begin with the raw amino-acid sequence, 113 residues long: Tyrosine-protein phosphatase 15 (113 aa).

The region spanning 1-113 is the Tyrosine-protein phosphatase domain; that stretch reads WRMVYDNNVN…RSTGDGVALI (113 aa).

This sequence belongs to the protein-tyrosine phosphatase family.

The enzyme catalyses O-phospho-L-tyrosyl-[protein] + H2O = L-tyrosyl-[protein] + phosphate. The sequence is that of Tyrosine-protein phosphatase 15 (STY-15) from Styela plicata (Wrinkled sea squirt).